A 265-amino-acid chain; its full sequence is MKNIHKIFSPEKKGKEKISVVTCYDFSFARILGETPIDSILVGDSLGMVFQGNSSTLPVTLEEMIYHTKVVRRGAPDKFIIADLPFLSYQTSIEEGIRSAGRMMKETDCDAVKIEGGSDFICELVAILKQIGIPVMGHLGLTPQSVHVFGGHRVQGKGEESSAKLLREAVALSESGAFSIVLEMIPAELGKRVSEEVGVLTIGIGAGPDCDGQVLVLNDLLGLDANFQPKFLKKFSNLHSIVKDAIESYHEEVRSGEFPGKDHSF.

The Mg(2+) site is built by D44 and D83. 3-methyl-2-oxobutanoate-binding positions include 44 to 45 (DS), D83, and K113. Mg(2+) is bound at residue E115. E183 (proton acceptor) is an active-site residue.

This sequence belongs to the PanB family. Homodecamer; pentamer of dimers. Mg(2+) serves as cofactor.

The protein resides in the cytoplasm. The enzyme catalyses 3-methyl-2-oxobutanoate + (6R)-5,10-methylene-5,6,7,8-tetrahydrofolate + H2O = 2-dehydropantoate + (6S)-5,6,7,8-tetrahydrofolate. It functions in the pathway cofactor biosynthesis; (R)-pantothenate biosynthesis; (R)-pantoate from 3-methyl-2-oxobutanoate: step 1/2. In terms of biological role, catalyzes the reversible reaction in which hydroxymethyl group from 5,10-methylenetetrahydrofolate is transferred onto alpha-ketoisovalerate to form ketopantoate. The polypeptide is 3-methyl-2-oxobutanoate hydroxymethyltransferase (Leptospira borgpetersenii serovar Hardjo-bovis (strain JB197)).